The chain runs to 257 residues: MSLIDIQNLTIKNTSEKSLIKGIDLKIFSQQINALIGESGAGKSLIAKALLEYLPFDLTCTYYSYQFDGENVSRLSKYYGHTIGYISQNYAESFNDHTKLGKQLTAIYRKHYKSSKEEALSKIDKALSWVNLQSKDILNKYSFQLSGGQLERVYIASVLMLEPKLIIADEPVASLDALNGNQVMDLLQHIVLEHGQTLFIITHNLSHVLKYCQYINVLKEGQIIEQGNIDHFKYEHLHPYTEQLIKYRTQLKRDYYD.

Residues Ile-4 to Ile-245 form the ABC transporter domain. Residue Gly-37–Ser-44 coordinates ATP.

It belongs to the ABC transporter superfamily. In terms of assembly, the complex is composed of two ATP-binding proteins (NikD and NikE), two transmembrane proteins (NikB and NikC) and a solute-binding protein (NikA).

It is found in the cell membrane. The catalysed reaction is Ni(2+)(out) + ATP + H2O = Ni(2+)(in) + ADP + phosphate + H(+). Part of the ABC transporter complex NikABCDE (Opp2) involved in nickel import. Probably responsible for energy coupling to the transport system. The chain is Nickel import system ATP-binding protein NikD from Staphylococcus aureus (strain bovine RF122 / ET3-1).